The primary structure comprises 136 residues: Ubiquinol-cytochrome c reductase complex assembly factor 2 (136 aa).

A mitochondrion-targeting transit peptide spans 1 to 13; the sequence is MAALRYRRFLKLC.

As to quaternary structure, interacts with UQCC1. Forms a complex, named COMB/coordinator of mitochondrial CYTB biogenesis, composed of UQCC1, UQCC2, UQCC4, UQCC5 and UQCC6; stabilizes nascent cytochrome b/MT-CYB and promotes its membrane insertion. Forms a complex, named COMA, composed of UQCC1, UQCC2 and UQCC4; activates MT-CYB translation. Forms a complex, named COMC, composed of UQCC1, UQCC2; UQCC3 and UQCC4; mediates MT-CYB hemylation and association with the first nuclear-encoded CIII subunit UQCRQ. As to expression, widely expressed with highest levels in brain, liver, kidney, heart, skeletal muscle, thymus, testis and pancreas (at protein level).

The protein localises to the mitochondrion matrix. Its subcellular location is the mitochondrion nucleoid. The protein resides in the mitochondrion. It localises to the mitochondrion intermembrane space. It is found in the mitochondrion inner membrane. Required for the assembly of the ubiquinol-cytochrome c reductase complex (mitochondrial respiratory chain complex III or cytochrome b-c1 complex). Plays a role in the modulation of respiratory chain activities such as oxygen consumption and ATP production and via its modulation of the respiratory chain activity can regulate skeletal muscle differentiation and insulin secretion by pancreatic beta-cells. Involved in cytochrome b translation and/or stability. This is Ubiquinol-cytochrome c reductase complex assembly factor 2 (Uqcc2) from Mus musculus (Mouse).